We begin with the raw amino-acid sequence, 248 residues long: 1-(5-phosphoribosyl)-5-[(5-phosphoribosylamino)methylideneamino] imidazole-4-carboxamide isomerase (248 aa).

D8 (proton acceptor) is an active-site residue. Residue D129 is the Proton donor of the active site.

The protein belongs to the HisA/HisF family.

It is found in the cytoplasm. It carries out the reaction 1-(5-phospho-beta-D-ribosyl)-5-[(5-phospho-beta-D-ribosylamino)methylideneamino]imidazole-4-carboxamide = 5-[(5-phospho-1-deoxy-D-ribulos-1-ylimino)methylamino]-1-(5-phospho-beta-D-ribosyl)imidazole-4-carboxamide. Its pathway is amino-acid biosynthesis; L-histidine biosynthesis; L-histidine from 5-phospho-alpha-D-ribose 1-diphosphate: step 4/9. The protein is 1-(5-phosphoribosyl)-5-[(5-phosphoribosylamino)methylideneamino] imidazole-4-carboxamide isomerase of Rhizobium johnstonii (strain DSM 114642 / LMG 32736 / 3841) (Rhizobium leguminosarum bv. viciae).